The sequence spans 970 residues: Transposase for insertion sequence element IS1071 in transposon Tn5271 (970 aa).

It belongs to the transposase 7 family.

In terms of biological role, required for transposition of transposon Tn5271. This is Transposase for insertion sequence element IS1071 in transposon Tn5271 from Comamonas testosteroni (Pseudomonas testosteroni).